Consider the following 533-residue polypeptide: Spindle pole body protein CSA6 (533 aa).

Disordered stretches follow at residues 1–32 and 53–130; these read MEDS…SDLT and DKYD…QEDE. Basic and acidic residues-rich tracts occupy residues 18-30 and 53-68; these read PEIK…KTSD and DKYD…DLTP. A compositionally biased stretch (low complexity) spans 83–94; sequence PSKFSSSIPQKP. Positions 103–121 are enriched in polar residues; sequence SSPTKNYTDHINQLRSGPN. A coiled-coil region spans residues 136 to 236; that stretch reads KYEIKRLKQE…RSERDELVKD (101 aa). Residues 309–318 are compositionally biased toward basic and acidic residues; it reads EKDKPSEDKT. Disordered regions lie at residues 309-329 and 349-453; these read EKDK…SKDA and SANS…QSTK. Polar residues-rich tracts occupy residues 349–392 and 405–421; these read SANS…SNSQ and IYSS…QSSH. Basic and acidic residues predominate over residues 432–445; sequence PRVERDHWTDRPPS.

The protein resides in the cytoplasm. The protein localises to the cytoskeleton. It is found in the microtubule organizing center. Its subcellular location is the spindle pole body. Its function is as follows. Plays a role in mitotic spindle pole body organization, possibly at the point of spindle pole body separation. Required for mitotic exit. This Candida dubliniensis (strain CD36 / ATCC MYA-646 / CBS 7987 / NCPF 3949 / NRRL Y-17841) (Yeast) protein is Spindle pole body protein CSA6.